Consider the following 329-residue polypeptide: RNA polymerase sigma factor SigB (329 aa).

The span at M1–E12 shows a compositional bias: polar residues. The segment at M1–P27 is disordered. The short motif at D120–M133 is the Polymerase core binding element. The H-T-H motif DNA-binding region spans L290 to R309.

It belongs to the sigma-70 factor family.

Its function is as follows. Sigma factors are initiation factors that promote the attachment of RNA polymerase to specific initiation sites and are then released. This Corynebacterium diphtheriae (strain ATCC 700971 / NCTC 13129 / Biotype gravis) protein is RNA polymerase sigma factor SigB (sigB).